The primary structure comprises 196 residues: ATP-dependent Clp protease proteolytic subunit (196 aa).

The active-site Nucleophile is the serine 98. Residue histidine 123 is part of the active site.

It belongs to the peptidase S14 family. As to quaternary structure, fourteen ClpP subunits assemble into 2 heptameric rings which stack back to back to give a disk-like structure with a central cavity, resembling the structure of eukaryotic proteasomes.

It is found in the cytoplasm. The catalysed reaction is Hydrolysis of proteins to small peptides in the presence of ATP and magnesium. alpha-casein is the usual test substrate. In the absence of ATP, only oligopeptides shorter than five residues are hydrolyzed (such as succinyl-Leu-Tyr-|-NHMec, and Leu-Tyr-Leu-|-Tyr-Trp, in which cleavage of the -Tyr-|-Leu- and -Tyr-|-Trp bonds also occurs).. In terms of biological role, cleaves peptides in various proteins in a process that requires ATP hydrolysis. Has a chymotrypsin-like activity. Plays a major role in the degradation of misfolded proteins. The chain is ATP-dependent Clp protease proteolytic subunit from Geobacillus sp. (strain WCH70).